Here is an 883-residue protein sequence, read N- to C-terminus: Valine--tRNA ligase (883 aa).

A 'HIGH' region motif is present at residues 46–56; sequence PNVTGKLHLGH. A 'KMSKS' region motif is present at residues 520–524; sequence KMSKS. An ATP-binding site is contributed by K523. A coiled-coil region spans residues 809–883; that stretch reads LADLLNVEEE…RIDEMKKLVK (75 aa).

It belongs to the class-I aminoacyl-tRNA synthetase family. ValS type 1 subfamily. Monomer.

Its subcellular location is the cytoplasm. It catalyses the reaction tRNA(Val) + L-valine + ATP = L-valyl-tRNA(Val) + AMP + diphosphate. Functionally, catalyzes the attachment of valine to tRNA(Val). As ValRS can inadvertently accommodate and process structurally similar amino acids such as threonine, to avoid such errors, it has a 'posttransfer' editing activity that hydrolyzes mischarged Thr-tRNA(Val) in a tRNA-dependent manner. The chain is Valine--tRNA ligase from Streptococcus pneumoniae serotype 4 (strain ATCC BAA-334 / TIGR4).